Consider the following 511-residue polypeptide: Cytochrome P450 monooxygenase esdpI (511 aa).

The helical transmembrane segment at 14-34 (VRAGLAIGVAILAIIVLFPGI) threads the bilayer. Cys-453 provides a ligand contact to heme.

Belongs to the cytochrome P450 family. The cofactor is heme.

Its subcellular location is the membrane. Its pathway is secondary metabolite biosynthesis; terpenoid biosynthesis. Cytochrome P450 monooxygenase; part of the cluster that mediates the biosynthesis of shearones, diterpenoid pyrones (DPs) which are structurally diverse meroterpenoids consisting of a diterpene linked by a pyrone, and which may exhibit a range of bioactivities. Whitin the pathway, esdpI takes part in the molecular scaffold modification via the hydroxylation at C-20 and can transform shearone C into shearone G. The molecular scaffold is commonly biosynthesized by a series of enzymes including the non-reducing polyketide synthase (NR-PKS) esdpA that generates an alpha-pyrone; the prenyltransferase esdpC that attaches a geranylgeranyl pyrophosphate (GGPP) produced by the GGPP synthase (GGPPS) esdpD onto the pyrone unit; the FAD-dependent monooxygenase esdpE that converts an olefin on the diterpene unit into an epoxide; and the terpene cyclase esdpB that catalyzes the cyclization reactions to give the molecular backbone shearone A. In the modification steps, esdpF oxidizes the hydroxy group to a ketone at C-3 and esdpG then attaches hydroxy groups at both C-11 and C-12. After that, esdpI hydroxylates at C-20 and esdpH hydroxylates at C-6'. The ether bridge is generated by nucleophilic attack of the hydroxy group at C-20 to the carbonyl carbon at C-3. EsdpH can also functions prior to esdpI. The different combinations of these modification enzymes lead to the production of diverse shearone derivatives, shearone I being the end product of the pathway. The alpha-ketoglutarate-dependent dioxygenase esdpJ seems not to be involved in this pathway. This Penicillium shearii (Eupenicillium shearii) protein is Cytochrome P450 monooxygenase esdpI.